The following is a 3415-amino-acid chain: Genome polyprotein (3415 aa).

The interval 1–29 is disordered; it reads MMTTSKGKGGGPPRRKLKVTANKSRPATS. Residues 1 to 96 lie on the Cytoplasmic side of the membrane; it reads MMTTSKGKGG…LHMRGRRRSG (96 aa). The propeptide at 95–115 is ER anchor for the capsid protein C, removed in mature form by serine protease NS3; it reads SGVDWTWIFLTMALMTMAMAT. Residues 97 to 117 form a helical membrane-spanning segment; sequence VDWTWIFLTMALMTMAMATTI. Residues 118–243 are Extracellular-facing; that stretch reads HRDREGYMVM…RVEGWMWKNK (126 aa). N-linked (GlcNAc...) asparagine; by host glycosylation occurs at N142. A helical transmembrane segment spans residues 244–260; it reads LLTAAIVALAWLMVDSW. A topological domain (cytoplasmic) is located at residue M261. Residues 262-278 traverse the membrane as a helical segment; the sequence is ARVTVILLALSLGPVYA. The Extracellular segment spans residues 279–726; it reads TRCTHLENRD…HTVLGGAFNT (448 aa). Disulfide bonds link C281–C308, C338–C394, C338–C399, C352–C383, C370–C394, and C370–C399. The tract at residues 376–389 is fusion peptide; sequence DRGWGNHCGFFGKG. A glycan (N-linked (GlcNAc...) asparagine; by host) is linked at N432. 2 disulfides stabilise this stretch: C464–C568 and C585–C617. A helical membrane pass occupies residues 727-747; the sequence is LFGGVGFIPKMLLGVALVWLG. Over 748 to 754 the chain is Cytoplasmic; that stretch reads LNARNPT. The chain crosses the membrane as a helical span at residues 755-775; it reads MSMTFLAVGALTLMMTMGVGA. The Extracellular portion of the chain corresponds to 776 to 1187; it reads DYGCAIDPER…LVRVEEIVRY (412 aa). 6 disulfides stabilise this stretch: C779-C790, C830-C920, C955-C1000, C1057-C1106, C1068-C1090, and C1089-C1093. 3 N-linked (GlcNAc...) asparagine; by host glycosylation sites follow: N860, N983, and N999. A helical membrane pass occupies residues 1188–1208; sequence VIAVGVTFHLELGPETMVLVM. Residues 1209-1233 are Cytoplasmic-facing; that stretch reads LQAVFNMRTCYLMGFLVKRVITTRE. The chain crosses the membrane as a helical span at residues 1234-1253; the sequence is VVTVYFLLLVLEMGIPEMNF. Position 1254 (G1254) is a topological domain, lumenal. Residues 1255–1275 traverse the membrane as a helical segment; that stretch reads HLWEWADALAMGLLIIKASAM. Residues 1276 to 1292 are Cytoplasmic-facing; sequence EDRRGLGFLLAGLMTQR. The chain crosses the membrane as a helical span at residues 1293 to 1313; the sequence is HLVAVHHGLMVFLTVALAVVG. Residues 1314–1327 lie on the Lumenal side of the membrane; sequence RNIYNGQKERKGLC. The helical transmembrane segment at 1328-1348 threads the bilayer; it reads FTVPLASLLGGSGSGLRMLAL. The Cytoplasmic segment spans residues 1349–1359; the sequence is WECLGGRGRRS. A helical membrane pass occupies residues 1360–1378; sequence LSEPLTVVGVMLAMASGLL. Residues 1379 to 1382 are Lumenal-facing; sequence RHSS. Residues 1383–1403 form a helical membrane-spanning segment; sequence QEALLALSAGSFLILMLILGT. Over 1404–1452 the chain is Cytoplasmic; the sequence is RRLQLTAEWAGVVEWNPELVNEGGEVSLKVRQDAMGNLHLTEVEREERR. The segment at 1410 to 1449 is interacts with and activates NS3 protease; sequence AEWAGVVEWNPELVNEGGEVSLKVRQDAMGNLHLTEVERE. The helical intramembrane region spans 1453-1473; the sequence is LALWLVFGLLASAYHWSGILV. Over 1474 to 2163 the chain is Cytoplasmic; that stretch reads TMGAWTVYEL…AERDAPEAML (690 aa). A Peptidase S7 domain is found at 1490-1669; it reads TDLVFSGQLP…NVEKSRPEMP (180 aa). Active-site charge relay system; for serine protease NS3 activity residues include H1543, D1567, and S1627. A Helicase ATP-binding domain is found at 1675–1832; sequence GKWTSKGSIT…ESKGAIVSEE (158 aa). Residue 1688–1695 participates in ATP binding; the sequence is MHPGSGKT. The DEAH box signature appears at 1780 to 1783; it reads DEAH. Residues 1842-2001 form the Helicase C-terminal domain; sequence DGFDWITEFE…TVRGPVATFY (160 aa). K1884 carries the post-translational modification N6-acetyllysine; by host. Residues 2164-2184 form a helical membrane-spanning segment; it reads TLLEVAVLGIATLGVVWCFIV. Residues 2185–2190 are Lumenal-facing; that stretch reads RTSVSR. Positions 2191–2210 form an intramembrane region, helical; sequence MVLGTLVLAVALILLWLGGM. Position 2211 (D2211) is a topological domain, lumenal. A helical transmembrane segment spans residues 2212–2232; sequence YGTMAGVALIFYLLLTVLQPE. The Cytoplasmic portion of the chain corresponds to 2233-2243; it reads PGKQRSGEDNR. A helical transmembrane segment spans residues 2244–2264; sequence LAFLLIGLGSVVGLVAANELG. The Lumenal segment spans residues 2265-2300; sequence YLEQTKTDISGLFRREDQGGMVWDAWTNIDIQPARS. The helical intramembrane region spans 2301–2321; that stretch reads WGTYVLIVSLFTPYMLHQLQT. Residues 2322–2344 lie on the Lumenal side of the membrane; sequence KIQRLVNSSVAAGTQAMRDLGGG. An intramembrane region (helical) is located at residues 2345 to 2365; sequence TPFFGVAGHVVALGVTSLVGA. The Lumenal portion of the chain corresponds to 2366–2369; the sequence is TPTS. The helical transmembrane segment at 2370–2390 threads the bilayer; that stretch reads LALGVALAALHLAVVTSGLEA. Topologically, residues 2391–2433 are cytoplasmic; sequence ELTQRAHRAFFSAMVKNPMVDGEIINPIPDGDPKPALYERKMS. Residues 2434-2454 traverse the membrane as a helical segment; it reads LFLAIGLCIAAVALNRTAAAM. Topologically, residues 2455-2479 are lumenal; it reads TEAGAVAVAALGQLLRPEEESWWTM. The chain crosses the membrane as a helical span at residues 2480-2500; sequence PMACGMAGLVRGSLWGLLPVL. Over 2501–3415 the chain is Cytoplasmic; that stretch reads HRIWLRTQGA…WELKLESSII (915 aa). The mRNA cap 0-1 NS5-type MT domain maps to 2513-2777; sequence GGAEGSTLGD…EIDLGTGTRC (265 aa). Residue S2568 coordinates S-adenosyl-L-methionine. S2568 is modified (phosphoserine). Catalysis depends on K2573, which acts as the For 2'-O-MTase activity. S-adenosyl-L-methionine contacts are provided by G2598, W2599, T2616, I2617, D2643, and V2644. The active-site For 2'-O-MTase activity is the D2658. I2659 is a binding site for S-adenosyl-L-methionine. Residues K2695 and E2731 each act as for 2'-O-MTase activity in the active site. Residues 2731 to 2735 are interaction with host SCRIB; sequence EMYYS. Residue Y2733 participates in S-adenosyl-L-methionine binding. Zn(2+)-binding residues include E2951, H2955, C2960, and C2963. The region spanning 3041 to 3190 is the RdRp catalytic domain; the sequence is GKLYADDTAG…KPIDDRFGKA (150 aa). Positions 3225, 3241, and 3360 each coordinate Zn(2+).

It in the N-terminal section; belongs to the class I-like SAM-binding methyltransferase superfamily. mRNA cap 0-1 NS5-type methyltransferase family. Homodimer. Interacts (via N-terminus) with host EXOC1 (via C-terminus); this interaction results in EXOC1 degradation through the proteasome degradation pathway. In terms of assembly, forms heterodimers with envelope protein E in the endoplasmic reticulum and Golgi. As to quaternary structure, homodimer; in the endoplasmic reticulum and Golgi. Forms homodimers as well as homohexamers. NS1 may interact with NS4A. In terms of assembly, forms a heterodimer with serine protease NS3. May form homooligomers. As to quaternary structure, forms a heterodimer with NS2B. Interacts with NS4B. Interacts with unphosphorylated RNA-directed RNA polymerase NS5; this interaction stimulates RNA-directed RNA polymerase NS5 guanylyltransferase activity. Interacts with serine protease NS3. In terms of assembly, interacts with host STAT2; this interaction inhibits the phosphorylation of the latter, and, when all viral proteins are present (polyprotein), targets STAT2 for degradation. In terms of processing, specific enzymatic cleavages in vivo yield mature proteins. Cleavages in the lumen of endoplasmic reticulum are performed by host signal peptidase, whereas cleavages in the cytoplasmic side are performed by serine protease NS3. Signal cleavage at the 2K-4B site requires a prior NS3 protease-mediated cleavage at the 4A-2K site. Cleaved in post-Golgi vesicles by a host furin, releasing the mature small envelope protein M, and peptide pr. This cleavage is incomplete as up to 30% of viral particles still carry uncleaved prM. Post-translationally, N-glycosylated. In terms of processing, N-glycosylated. The excreted form is glycosylated and this is required for efficient secretion of the protein from infected cells. Acetylated by host KAT5. Acetylation modulates NS3 RNA-binding and unwinding activities and plays an important positive role for viral replication. Post-translationally, phosphorylated on serines residues. This phosphorylation may trigger NS5 nuclear localization.

It localises to the virion. The protein resides in the host nucleus. It is found in the host cytoplasm. Its subcellular location is the host perinuclear region. The protein localises to the secreted. It localises to the virion membrane. The protein resides in the host endoplasmic reticulum membrane. It catalyses the reaction Selective hydrolysis of -Xaa-Xaa-|-Yaa- bonds in which each of the Xaa can be either Arg or Lys and Yaa can be either Ser or Ala.. The enzyme catalyses RNA(n) + a ribonucleoside 5'-triphosphate = RNA(n+1) + diphosphate. The catalysed reaction is a ribonucleoside 5'-triphosphate + H2O = a ribonucleoside 5'-diphosphate + phosphate + H(+). It carries out the reaction ATP + H2O = ADP + phosphate + H(+). It catalyses the reaction a 5'-end (5'-triphosphoguanosine)-ribonucleoside in mRNA + S-adenosyl-L-methionine = a 5'-end (N(7)-methyl 5'-triphosphoguanosine)-ribonucleoside in mRNA + S-adenosyl-L-homocysteine. The enzyme catalyses a 5'-end (N(7)-methyl 5'-triphosphoguanosine)-ribonucleoside in mRNA + S-adenosyl-L-methionine = a 5'-end (N(7)-methyl 5'-triphosphoguanosine)-(2'-O-methyl-ribonucleoside) in mRNA + S-adenosyl-L-homocysteine + H(+). Plays a role in virus budding by binding to the cell membrane and gathering the viral RNA into a nucleocapsid that forms the core of a mature virus particle. During virus entry, may induce genome penetration into the host cytoplasm after hemifusion induced by the surface proteins. Can migrate to the cell nucleus where it modulates host functions. In terms of biological role, inhibits RNA silencing by interfering with host Dicer. Functionally, prevents premature fusion activity of envelope proteins in trans-Golgi by binding to envelope protein E at pH6.0. After virion release in extracellular space, gets dissociated from E dimers. Its function is as follows. Acts as a chaperone for envelope protein E during intracellular virion assembly by masking and inactivating envelope protein E fusion peptide. prM is the only viral peptide matured by host furin in the trans-Golgi network probably to avoid catastrophic activation of the viral fusion activity in acidic Golgi compartment prior to virion release. prM-E cleavage is inefficient, and many virions are only partially matured. These uncleaved prM would play a role in immune evasion. May play a role in virus budding. Exerts cytotoxic effects by activating a mitochondrial apoptotic pathway through M ectodomain. May display a viroporin activity. In terms of biological role, binds to host cell surface receptor and mediates fusion between viral and cellular membranes. Envelope protein is synthesized in the endoplasmic reticulum in the form of heterodimer with protein prM. They play a role in virion budding in the ER, and the newly formed immature particle is covered with 60 spikes composed of heterodimer between precursor prM and envelope protein E. The virion is transported to the Golgi apparatus where the low pH causes dissociation of PrM-E heterodimers and formation of E homodimers. prM-E cleavage is inefficient, and many virions are only partially matured. These uncleaved prM would play a role in immune evasion. Functionally, involved in immune evasion, pathogenesis and viral replication. Once cleaved off the polyprotein, is targeted to three destinations: the viral replication cycle, the plasma membrane and the extracellular compartment. Essential for viral replication. Required for formation of the replication complex and recruitment of other non-structural proteins to the ER-derived membrane structures. Excreted as a hexameric lipoparticle that plays a role against host immune response. Antagonizing the complement function. Binds to the host macrophages and dendritic cells. Inhibits signal transduction originating from Toll-like receptor 3 (TLR3). Its function is as follows. Component of the viral RNA replication complex that functions in virion assembly and antagonizes the host immune response. Required cofactor for the serine protease function of NS3. May have membrane-destabilizing activity and form viroporins. In terms of biological role, displays three enzymatic activities: serine protease, NTPase and RNA helicase. NS3 serine protease, in association with NS2B, performs its autocleavage and cleaves the polyprotein at dibasic sites in the cytoplasm: C-prM, NS2A-NS2B, NS2B-NS3, NS3-NS4A, NS4A-2K and NS4B-NS5. NS3 RNA helicase binds RNA and unwinds dsRNA in the 3' to 5' direction. Functionally, regulates the ATPase activity of the NS3 helicase activity. NS4A allows NS3 helicase to conserve energy during unwinding. Its function is as follows. Functions as a signal peptide for NS4B and is required for the interferon antagonism activity of the latter. Induces the formation of ER-derived membrane vesicles where the viral replication takes place. Inhibits interferon (IFN)-induced host STAT1 phosphorylation and nuclear translocation, thereby preventing the establishment of cellular antiviral state by blocking the IFN-alpha/beta pathway. Inhibits STAT2 translocation in the nucleus after IFN-alpha treatment. In terms of biological role, replicates the viral (+) and (-) RNA genome, and performs the capping of genomes in the cytoplasm. NS5 methylates viral RNA cap at guanine N-7 and ribose 2'-O positions. Besides its role in RNA genome replication, also prevents the establishment of cellular antiviral state by blocking the interferon-alpha/beta (IFN-alpha/beta) signaling pathway. Inhibits host TYK2 and STAT2 phosphorylation, thereby preventing activation of JAK-STAT signaling pathway. The polypeptide is Genome polyprotein (Tick-borne powassan virus (strain LB) (POWV)).